We begin with the raw amino-acid sequence, 234 residues long: MAKKVFKRLEKLFSKIQNDKAYGVEQGVEVVKSLASAKFDETVEVALRLGVDPRHADQMVRGAVVLPHGTGKKVRVAVFAKDIKQDEAKNAGADVVGGDDLAEEIKNGRIDFDMVIATPDMMAVVGKVGRILGPKGLMPNPKTGTVTMDIAKAVTNAKSGQVNFRVDKKGNVHAPIGKASFPEEKIKENMLELVKTINRLKPSSAKGKYIRNAALSLTMSPSVSLDAQELMDIK.

Belongs to the universal ribosomal protein uL1 family. As to quaternary structure, part of the 50S ribosomal subunit.

Binds directly to 23S rRNA. The L1 stalk is quite mobile in the ribosome, and is involved in E site tRNA release. In terms of biological role, protein L1 is also a translational repressor protein, it controls the translation of the L11 operon by binding to its mRNA. The sequence is that of Large ribosomal subunit protein uL1 from Helicobacter pylori (strain G27).